Here is a 175-residue protein sequence, read N- to C-terminus: ATP-dependent protease subunit HslV (175 aa).

The active site involves threonine 5. Na(+) is bound by residues glycine 160, aspartate 163, and threonine 166.

The protein belongs to the peptidase T1B family. HslV subfamily. In terms of assembly, a double ring-shaped homohexamer of HslV is capped on each side by a ring-shaped HslU homohexamer. The assembly of the HslU/HslV complex is dependent on binding of ATP.

It is found in the cytoplasm. The enzyme catalyses ATP-dependent cleavage of peptide bonds with broad specificity.. With respect to regulation, allosterically activated by HslU binding. In terms of biological role, protease subunit of a proteasome-like degradation complex believed to be a general protein degrading machinery. This is ATP-dependent protease subunit HslV from Myxococcus xanthus.